We begin with the raw amino-acid sequence, 222 residues long: MKSAVVLLPGLNRDRDMIAALTKISGKPPVTVWQTDTEIPDVDLIAIPGGFSFGDYLRCGAIAARMPVMRAVAEKAAKGVTVIGVCNGFQILVEAGLLPGALMRNTSLKFVCRQIKLEITNANTMFTRRYQPGQVIRSPVAHHDGNYFADAETLARLEGEGQVVFRYAEGTNPNGSINDIAGIINEQGNVLGLMPHPENLIEAAHGGSDGRALFEGALGIAA.

One can recognise a Glutamine amidotransferase type-1 domain in the interval 3-222 (SAVVLLPGLN…LFEGALGIAA (220 aa)). Residue C86 is the Nucleophile of the active site. Residues H196 and E198 contribute to the active site.

Part of the FGAM synthase complex composed of 1 PurL, 1 PurQ and 2 PurS subunits.

It localises to the cytoplasm. The catalysed reaction is N(2)-formyl-N(1)-(5-phospho-beta-D-ribosyl)glycinamide + L-glutamine + ATP + H2O = 2-formamido-N(1)-(5-O-phospho-beta-D-ribosyl)acetamidine + L-glutamate + ADP + phosphate + H(+). It catalyses the reaction L-glutamine + H2O = L-glutamate + NH4(+). The protein operates within purine metabolism; IMP biosynthesis via de novo pathway; 5-amino-1-(5-phospho-D-ribosyl)imidazole from N(2)-formyl-N(1)-(5-phospho-D-ribosyl)glycinamide: step 1/2. Part of the phosphoribosylformylglycinamidine synthase complex involved in the purines biosynthetic pathway. Catalyzes the ATP-dependent conversion of formylglycinamide ribonucleotide (FGAR) and glutamine to yield formylglycinamidine ribonucleotide (FGAM) and glutamate. The FGAM synthase complex is composed of three subunits. PurQ produces an ammonia molecule by converting glutamine to glutamate. PurL transfers the ammonia molecule to FGAR to form FGAM in an ATP-dependent manner. PurS interacts with PurQ and PurL and is thought to assist in the transfer of the ammonia molecule from PurQ to PurL. This Mesorhizobium japonicum (strain LMG 29417 / CECT 9101 / MAFF 303099) (Mesorhizobium loti (strain MAFF 303099)) protein is Phosphoribosylformylglycinamidine synthase subunit PurQ.